Reading from the N-terminus, the 168-residue chain is Peptidoglycan-associated lipoprotein (168 aa).

An N-terminal signal peptide occupies residues 1–24 (MRRIQSIARSPIAIALFMSLAVAG). Cys-25 carries N-palmitoyl cysteine lipidation. Cys-25 carries S-diacylglycerol cysteine lipidation. Residues 51–167 (QDFTVNVGDR…RAVTVLNGAG (117 aa)) form the OmpA-like domain.

The protein belongs to the Pal lipoprotein family. As to quaternary structure, the Tol-Pal system is composed of five core proteins: the inner membrane proteins TolA, TolQ and TolR, the periplasmic protein TolB and the outer membrane protein Pal. They form a network linking the inner and outer membranes and the peptidoglycan layer. In terms of processing, the N-terminus is blocked.

It localises to the cell outer membrane. Its function is as follows. Part of the Tol-Pal system, which plays a role in outer membrane invagination during cell division and is important for maintaining outer membrane integrity. The polypeptide is Peptidoglycan-associated lipoprotein (Brucella abortus biovar 1 (strain 9-941)).